The chain runs to 488 residues: Ribulose bisphosphate carboxylase large chain (488 aa).

Substrate contacts are provided by Asn127 and Thr177. Lys179 serves as the catalytic Proton acceptor. Lys181 lines the substrate pocket. Residues Lys205, Asp207, and Glu208 each coordinate Mg(2+). Lys205 carries the N6-carboxylysine modification. Catalysis depends on His297, which acts as the Proton acceptor. Substrate contacts are provided by Arg298, His330, and Ser382.

The protein belongs to the RuBisCO large chain family. Type I subfamily. In terms of assembly, heterohexadecamer of 8 large chains and 8 small chains. The cofactor is Mg(2+).

Its subcellular location is the plastid. It localises to the chloroplast. The enzyme catalyses 2 (2R)-3-phosphoglycerate + 2 H(+) = D-ribulose 1,5-bisphosphate + CO2 + H2O. It carries out the reaction D-ribulose 1,5-bisphosphate + O2 = 2-phosphoglycolate + (2R)-3-phosphoglycerate + 2 H(+). Functionally, ruBisCO catalyzes two reactions: the carboxylation of D-ribulose 1,5-bisphosphate, the primary event in carbon dioxide fixation, as well as the oxidative fragmentation of the pentose substrate in the photorespiration process. Both reactions occur simultaneously and in competition at the same active site. This Olisthodiscus luteus (Marine phytoflagellate) protein is Ribulose bisphosphate carboxylase large chain.